A 616-amino-acid polypeptide reads, in one-letter code: Chaperone protein HscA (616 aa).

Belongs to the heat shock protein 70 family.

Chaperone involved in the maturation of iron-sulfur cluster-containing proteins. Has a low intrinsic ATPase activity which is markedly stimulated by HscB. Involved in the maturation of IscU. The sequence is that of Chaperone protein HscA from Salmonella heidelberg (strain SL476).